A 343-amino-acid chain; its full sequence is Insertion element IS630 uncharacterized 39 kDa protein (343 aa).

The chain is Insertion element IS630 uncharacterized 39 kDa protein from Shigella sonnei.